Here is an 80-residue protein sequence, read N- to C-terminus: uncharacterized protein (80 aa).

Residues 1-15 (MEVIVVIVVIVVVIA) form the signal peptide. Low complexity predominate over residues 23 to 44 (NSNSNSNNSSDSSNESNNSDSS). The tract at residues 23 to 52 (NSNSNSNNSSDSSNESNNSDSSKNGGSDIY) is disordered. Residues Asn-29, Asn-30, Asn-36, Asn-39, and Asn-64 are each glycosylated (N-linked (GlcNAc...) asparagine).

It localises to the secreted. This is an uncharacterized protein from Dictyostelium discoideum (Social amoeba).